The primary structure comprises 118 residues: Large ribosomal subunit protein uL22 (118 aa).

The protein belongs to the universal ribosomal protein uL22 family. In terms of assembly, part of the 50S ribosomal subunit.

In terms of biological role, this protein binds specifically to 23S rRNA; its binding is stimulated by other ribosomal proteins, e.g. L4, L17, and L20. It is important during the early stages of 50S assembly. It makes multiple contacts with different domains of the 23S rRNA in the assembled 50S subunit and ribosome. Functionally, the globular domain of the protein is located near the polypeptide exit tunnel on the outside of the subunit, while an extended beta-hairpin is found that lines the wall of the exit tunnel in the center of the 70S ribosome. The protein is Large ribosomal subunit protein uL22 of Listeria innocua serovar 6a (strain ATCC BAA-680 / CLIP 11262).